The primary structure comprises 133 residues: Ribosomal silencing factor RsfS (133 aa).

It belongs to the Iojap/RsfS family. As to quaternary structure, interacts with ribosomal protein uL14 (rplN).

It localises to the cytoplasm. Its function is as follows. Functions as a ribosomal silencing factor. Interacts with ribosomal protein uL14 (rplN), blocking formation of intersubunit bridge B8. Prevents association of the 30S and 50S ribosomal subunits and the formation of functional ribosomes, thus repressing translation. The polypeptide is Ribosomal silencing factor RsfS (Zymomonas mobilis subsp. mobilis (strain ATCC 31821 / ZM4 / CP4)).